Consider the following 70-residue polypeptide: Conotoxin Im23.3 (70 aa).

The signal sequence occupies residues 1–22; it reads MIMRMTLTLFVLVVMTAASASG. A propeptide spanning residues 23 to 28 is cleaved from the precursor; that stretch reads DALTEA. Intrachain disulfides connect C34/C41, C45/C53, and C54/C69.

Belongs to the conotoxin K superfamily. In terms of tissue distribution, expressed by the venom duct.

It localises to the secreted. Neurotoxin that induces excitatory symptoms in mice following intracranial administration. No symptoms are observed after intraperitoneal and intravenous (tail vein) injections. The polypeptide is Conotoxin Im23.3 (Conus imperialis (Imperial cone)).